A 261-amino-acid chain; its full sequence is Cytochrome c oxidase subunit 3 (261 aa).

Residues 1–15 (MTHQTHAYHMVNPSP) are Mitochondrial matrix-facing. A helical membrane pass occupies residues 16 to 34 (WPLTGALSALLLTSGLMMW). At 35 to 40 (FHFNNP) the chain is on the mitochondrial intermembrane side. Residues 41–66 (TLLVLGLLTNLISSYQWWRDIVREGT) form a helical membrane-spanning segment. The Mitochondrial matrix portion of the chain corresponds to 67–72 (YQGHHT). A helical membrane pass occupies residues 73–105 (KVVQKGLRYGMVLFIISEVFFFLGFFWAFYHSS). Topologically, residues 106–128 (LAPTPELGGCWPPTGISPLNPLE) are mitochondrial intermembrane. A helical transmembrane segment spans residues 129 to 152 (VPLLNTSILLASGVSITWSHHSLM). At 153–155 (EGN) the chain is on the mitochondrial matrix side. A helical membrane pass occupies residues 156-183 (RKQMIQALMITIALGLYFTALQAMEYYE). At 184–190 (SSFTISD) the chain is on the mitochondrial intermembrane side. The helical transmembrane segment at 191–223 (GVYGSTFFVATGFHGLHVIIGTTFLITCLLRQL) threads the bilayer. The Mitochondrial matrix portion of the chain corresponds to 224–232 (LYHFTSNHH). Residues 233–256 (FGFEAAAWYWHFVDVVWLFLYVSI) form a helical membrane-spanning segment. Topologically, residues 257–261 (YWWGS) are mitochondrial intermembrane.

The protein belongs to the cytochrome c oxidase subunit 3 family. Component of the cytochrome c oxidase (complex IV, CIV), a multisubunit enzyme composed of 14 subunits. The complex is composed of a catalytic core of 3 subunits MT-CO1, MT-CO2 and MT-CO3, encoded in the mitochondrial DNA, and 11 supernumerary subunits COX4I, COX5A, COX5B, COX6A, COX6B, COX6C, COX7A, COX7B, COX7C, COX8 and NDUFA4, which are encoded in the nuclear genome. The complex exists as a monomer or a dimer and forms supercomplexes (SCs) in the inner mitochondrial membrane with NADH-ubiquinone oxidoreductase (complex I, CI) and ubiquinol-cytochrome c oxidoreductase (cytochrome b-c1 complex, complex III, CIII), resulting in different assemblies (supercomplex SCI(1)III(2)IV(1) and megacomplex MCI(2)III(2)IV(2)).

Its subcellular location is the mitochondrion inner membrane. The catalysed reaction is 4 Fe(II)-[cytochrome c] + O2 + 8 H(+)(in) = 4 Fe(III)-[cytochrome c] + 2 H2O + 4 H(+)(out). In terms of biological role, component of the cytochrome c oxidase, the last enzyme in the mitochondrial electron transport chain which drives oxidative phosphorylation. The respiratory chain contains 3 multisubunit complexes succinate dehydrogenase (complex II, CII), ubiquinol-cytochrome c oxidoreductase (cytochrome b-c1 complex, complex III, CIII) and cytochrome c oxidase (complex IV, CIV), that cooperate to transfer electrons derived from NADH and succinate to molecular oxygen, creating an electrochemical gradient over the inner membrane that drives transmembrane transport and the ATP synthase. Cytochrome c oxidase is the component of the respiratory chain that catalyzes the reduction of oxygen to water. Electrons originating from reduced cytochrome c in the intermembrane space (IMS) are transferred via the dinuclear copper A center (CU(A)) of subunit 2 and heme A of subunit 1 to the active site in subunit 1, a binuclear center (BNC) formed by heme A3 and copper B (CU(B)). The BNC reduces molecular oxygen to 2 water molecules using 4 electrons from cytochrome c in the IMS and 4 protons from the mitochondrial matrix. The chain is Cytochrome c oxidase subunit 3 (MT-CO3) from Tachyglossus aculeatus aculeatus (Southeast Australian short-beaked echidna).